The primary structure comprises 307 residues: Beta-lactamase (307 aa).

The signal sequence occupies residues 1–26; sequence MKLWFSTLKLKKAAAVLLFSCVALAG. Cys-27 carries N-palmitoyl cysteine lipidation. Residue Cys-27 is the site of S-diacylglycerol cysteine attachment. Ser-86 functions as the Acyl-ester intermediate in the catalytic mechanism. Glu-182 functions as the Proton acceptor in the catalytic mechanism. 248-250 contacts substrate; that stretch reads KTG.

Belongs to the class-A beta-lactamase family. Large exopenicillinase is the primary secretion product; it can be converted to small exopenicillinase.

It localises to the cell membrane. The catalysed reaction is a beta-lactam + H2O = a substituted beta-amino acid. This Bacillus licheniformis protein is Beta-lactamase (penP).